Here is a 189-residue protein sequence, read N- to C-terminus: Anthranilate synthase component 2 (189 aa).

The region spanning 1 to 189 (MILIIDNYDS…QLLRNFLEYS (189 aa)) is the Glutamine amidotransferase type-1 domain. 52–54 (GPG) lines the L-glutamine pocket. The active-site Nucleophile; for GATase activity is the Cys-79. L-glutamine is bound by residues Gln-83 and 129-130 (SL). Catalysis depends on residues His-169 and Glu-171.

As to quaternary structure, tetramer of two components I and two components II.

It localises to the plastid. The protein resides in the chloroplast. The enzyme catalyses chorismate + L-glutamine = anthranilate + pyruvate + L-glutamate + H(+). Its pathway is amino-acid biosynthesis; L-tryptophan biosynthesis; L-tryptophan from chorismate: step 1/5. In Pyropia yezoensis (Susabi-nori), this protein is Anthranilate synthase component 2 (trpG).